The sequence spans 519 residues: Acetylcholine receptor subunit beta-like 2 (519 aa).

A signal peptide spans 1 to 18 (MWHWSLLCVFLLVPLANS). Residues 19–244 (TAPISFEANP…ITFKLTMRRK (226 aa)) are Extracellular-facing. The N-linked (GlcNAc...) asparagine glycan is linked to Asn-50. Cys-154 and Cys-168 are oxidised to a cystine. Transmembrane regions (helical) follow at residues 245-269 (TLFYTVNLIVPCVALTFLTVLVFYL), 277-295 (VTLCISILVSLTVFFLLLA), and 311-332 (YLLFTMILVSLSVWTTVCVLNI). Over 333–462 (HFRSPSTHNM…WKFVSMVLDR (130 aa)) the chain is Cytoplasmic. A helical membrane pass occupies residues 463–481 (FFLWLFTLSCVFGTLAIIC).

This sequence belongs to the ligand-gated ion channel (TC 1.A.9) family. Acetylcholine receptor (TC 1.A.9.1) subfamily. CNS in embryos.

It localises to the postsynaptic cell membrane. The protein localises to the cell membrane. In terms of biological role, after binding acetylcholine, the AChR responds by an extensive change in conformation that affects all subunits and leads to opening of an ion-conducting channel across the plasma membrane. The polypeptide is Acetylcholine receptor subunit beta-like 2 (nAChRbeta2) (Drosophila melanogaster (Fruit fly)).